Consider the following 89-residue polypeptide: Mapacalcine (89 aa).

Gln-89 carries the post-translational modification Glutamine amide.

In terms of assembly, homodimer. Post-translationally, contains disulfide bonds which may also be involved in dimerization.

In terms of biological role, blocks calcium currents via interaction with a yet unknown target protein. Has no effect on L-type, T-type, N-type or P/Q-type voltage-gated calcium channels (VGCC). Has no effect on voltage-gated potassium or chloride channels. Blocks non-L-type VGCC calcium currents in mouse duodenal myocytes (IC(50)=0.2 uM). Blocks calcium influx induced by hypoxia/reoxygenation in rat hepatocytes. In Pione vastifica (Boring sponge), this protein is Mapacalcine.